The primary structure comprises 110 residues: UPF0060 membrane protein BTH_I2792 (110 aa).

A run of 4 helical transmembrane segments spans residues 9–29 (ALFV…WLVL), 34–54 (PVWL…LLTL), 64–84 (AAYG…VDGV), and 86–106 (LSRW…VIAL).

Belongs to the UPF0060 family.

The protein localises to the cell inner membrane. This Burkholderia thailandensis (strain ATCC 700388 / DSM 13276 / CCUG 48851 / CIP 106301 / E264) protein is UPF0060 membrane protein BTH_I2792.